Here is a 73-residue protein sequence, read N- to C-terminus: Small ribosomal subunit protein bS18 (73 aa).

Belongs to the bacterial ribosomal protein bS18 family. As to quaternary structure, part of the 30S ribosomal subunit. Forms a tight heterodimer with protein bS6.

Binds as a heterodimer with protein bS6 to the central domain of the 16S rRNA, where it helps stabilize the platform of the 30S subunit. The protein is Small ribosomal subunit protein bS18 of Prochlorococcus marinus (strain MIT 9313).